Reading from the N-terminus, the 1024-residue chain is SWI/SNF-related matrix-associated actin-dependent regulator of chromatin subfamily A containing DEAD/H box 1 (1024 aa).

The residue at position 1 (Met-1) is an N-acetylmethionine. The segment at 1-83 (MNLFNLDRFR…NESKASLSCF (83 aa)) is disordered. Residues 7–19 (DRFRFEKRSKIEE) are compositionally biased toward basic and acidic residues. Thr-54 carries the phosphothreonine modification. Ser-57 is modified (phosphoserine). Lys-77 participates in a covalent cross-link: Glycyl lysine isopeptide (Lys-Gly) (interchain with G-Cter in SUMO2). 6 positions are modified to phosphoserine: Ser-79, Ser-124, Ser-127, Ser-132, Ser-145, and Ser-151. Residues 156–198 (LKDAKLQTLKELFPQRSDSDLLKLIDSTSTMDGAIAAALLKFG) enclose the CUE 1 domain. Residues 201–250 (GGGPRKRKLSSSSEAYEEDEANDDQSLKKPRGDRREESNESAEASSNWEK) are disordered. Phosphoserine occurs at positions 210 and 213. Phosphotyrosine is present on Tyr-216. Phosphoserine is present on residues Ser-238 and Ser-241. The region spanning 250-293 (KQESIVLKLQKEFPNFDKQELREVLKEHEWMYTEALESLKVFAE) is the CUE 2 domain. Phosphoserine is present on Ser-301. The disordered stretch occupies residues 331 to 369 (SMKPQNGFNKKRKKNVFNPKKAVEDSEYDSGSDAGSSLD). Residues Lys-333 and Lys-469 each participate in a glycyl lysine isopeptide (Lys-Gly) (interchain with G-Cter in SUMO2) cross-link. A Helicase ATP-binding domain is found at 507–675 (ALVHKHGLNG…MSLLNFVMPH (169 aa)). 519–527 (ADEMGLGKT) provides a ligand contact to ATP. The DEGH box signature appears at 626-629 (DEGH). The Nuclear localization signal signature appears at 719 to 736 (RRVKEEVLKLLPPKKDQI). Lys-722 participates in a covalent cross-link: Glycyl lysine isopeptide (Lys-Gly) (interchain with G-Cter in SUMO2). The 153-residue stretch at 856 to 1008 (TLGCILSELK…MTTVDEADEG (153 aa)) folds into the Helicase C-terminal domain. 895-902 (YLRLDGKT) is an ATP binding site. A Glycyl lysine isopeptide (Lys-Gly) (interchain with G-Cter in SUMO2) cross-link involves residue Lys-994. The DEAD box motif lies at 1003–1006 (DEAD).

This sequence belongs to the SNF2/RAD54 helicase family. Binds to DNA preferentially in the vicinity of transcriptional start sites. Interacts with MSH2 and TRIM28. Part of a complex composed of TRIM28, HDAC1, HDAC2 and EHMT2. Interacts with PCNA.

Its subcellular location is the nucleus. The protein resides in the chromosome. The catalysed reaction is ATP + H2O = ADP + phosphate + H(+). Functionally, DNA helicase that possesses intrinsic ATP-dependent nucleosome-remodeling activity and is both required for DNA repair and heterochromatin organization. Promotes DNA end resection of double-strand breaks (DSBs) following DNA damage: probably acts by weakening histone DNA interactions in nucleosomes flanking DSBs. Required for the restoration of heterochromatin organization after replication. Acts at replication sites to facilitate the maintenance of heterochromatin by directing H3 and H4 histones deacetylation, H3 'Lys-9' trimethylation (H3K9me3) and restoration of silencing. This is SWI/SNF-related matrix-associated actin-dependent regulator of chromatin subfamily A containing DEAD/H box 1 (Smarcad1) from Rattus norvegicus (Rat).